A 538-amino-acid polypeptide reads, in one-letter code: Bifunctional purine biosynthesis protein PurH (538 aa).

One can recognise an MGS-like domain in the interval 8–158 (IPAPDKVKIR…KNHAYVTVVT (151 aa)).

The protein belongs to the PurH family.

The enzyme catalyses (6R)-10-formyltetrahydrofolate + 5-amino-1-(5-phospho-beta-D-ribosyl)imidazole-4-carboxamide = 5-formamido-1-(5-phospho-D-ribosyl)imidazole-4-carboxamide + (6S)-5,6,7,8-tetrahydrofolate. It carries out the reaction IMP + H2O = 5-formamido-1-(5-phospho-D-ribosyl)imidazole-4-carboxamide. The protein operates within purine metabolism; IMP biosynthesis via de novo pathway; 5-formamido-1-(5-phospho-D-ribosyl)imidazole-4-carboxamide from 5-amino-1-(5-phospho-D-ribosyl)imidazole-4-carboxamide (10-formyl THF route): step 1/1. It functions in the pathway purine metabolism; IMP biosynthesis via de novo pathway; IMP from 5-formamido-1-(5-phospho-D-ribosyl)imidazole-4-carboxamide: step 1/1. This Agrobacterium fabrum (strain C58 / ATCC 33970) (Agrobacterium tumefaciens (strain C58)) protein is Bifunctional purine biosynthesis protein PurH.